A 209-amino-acid polypeptide reads, in one-letter code: MSRAATTRMGLLEVRARRAVAGKGARLLRAKREVLASELWKLVHDVLEGRARLDEALHRAVKALELAKALEGEERLASLALPAARAVPLAVTVRRVWGVPTPSVAAPPLVRAADQRGSSPVSWGPSGADAARHHEESLEVLLTIASKELHLARLGEEIRETSRRINALEQLVLPALRSEASRIAAALDERDREDAVRLRRFRARHPRPA.

This sequence belongs to the V-ATPase D subunit family.

In terms of biological role, produces ATP from ADP in the presence of a proton gradient across the membrane. This chain is V-type ATP synthase subunit D, found in Anaeromyxobacter dehalogenans (strain 2CP-1 / ATCC BAA-258).